Here is a 215-residue protein sequence, read N- to C-terminus: Probable maleylacetoacetate isomerase (215 aa).

Positions 2 to 85 (MSLILYGYWR…YLDETYPAPR (84 aa)) constitute a GST N-terminal domain. In terms of domain architecture, GST C-terminal spans 90-215 (RGAERYQVKA…AAPENQPDAC (126 aa)).

It belongs to the GST superfamily. Zeta family.

The enzyme catalyses 4-maleylacetoacetate = 4-fumarylacetoacetate. The protein operates within amino-acid degradation; L-phenylalanine degradation; acetoacetate and fumarate from L-phenylalanine: step 5/6. The sequence is that of Probable maleylacetoacetate isomerase (maiA) from Vibrio cholerae serotype O1 (strain ATCC 39315 / El Tor Inaba N16961).